Consider the following 396-residue polypeptide: Mannonate dehydratase (396 aa).

Belongs to the mannonate dehydratase family. Fe(2+) serves as cofactor. Requires Mn(2+) as cofactor.

It carries out the reaction D-mannonate = 2-dehydro-3-deoxy-D-gluconate + H2O. It participates in carbohydrate metabolism; pentose and glucuronate interconversion. Its function is as follows. Catalyzes the dehydration of D-mannonate. The protein is Mannonate dehydratase of Serratia proteamaculans (strain 568).